The chain runs to 106 residues: UPF0213 protein VPA1222 (106 aa).

The 76-residue stretch at 7 to 82 (QHWSVYLIRN…KQLTKSKKEQ (76 aa)) folds into the GIY-YIG domain.

Belongs to the UPF0213 family.

The polypeptide is UPF0213 protein VPA1222 (Vibrio parahaemolyticus serotype O3:K6 (strain RIMD 2210633)).